A 548-amino-acid chain; its full sequence is Inosine-5'-monophosphate dehydrogenase (548 aa).

CBS domains follow at residues 121–201 and 205–261; these read FILD…EDPV and MSTE…PLAS. NAD(+)-binding positions include 298 to 300 and 348 to 350; these read DSS and GMG. 2 residues coordinate K(+): Gly350 and Gly352. Ser353 contributes to the IMP binding site. K(+) is bound at residue Cys355. Cys355 acts as the Thioimidate intermediate in catalysis. IMP-binding positions include 388-390 and 411-412; these read DGG and GS. The active-site Proton acceptor is the Arg461. An IMP-binding site is contributed by Gln473. Residues 527–548 are disordered; the sequence is ASAQTEGNVHGLHSHEKKLYSS. Residue Ser528 participates in K(+) binding. The segment covering 539–548 has biased composition (basic and acidic residues); it reads HSHEKKLYSS.

This sequence belongs to the IMPDH/GMPR family. Homotetramer. It depends on K(+) as a cofactor.

The protein resides in the cytoplasm. It catalyses the reaction IMP + NAD(+) + H2O = XMP + NADH + H(+). The protein operates within purine metabolism; XMP biosynthesis via de novo pathway; XMP from IMP: step 1/1. Its activity is regulated as follows. Mycophenolic acid (MPA) is a non-competitive inhibitor that prevents formation of the closed enzyme conformation by binding to the same site as the amobile flap. In contrast, mizoribine monophosphate (MZP) is a competitive inhibitor that induces the closed conformation. MPA is a potent inhibitor of mammalian IMPDHs but a poor inhibitor of the bacterial enzymes. MZP is a more potent inhibitor of bacterial IMPDH. Catalyzes the conversion of inosine 5'-phosphate (IMP) to xanthosine 5'-phosphate (XMP), the first committed and rate-limiting step in the de novo synthesis of guanine nucleotides, and therefore plays an important role in the regulation of cell growth. Part of the gene cluster that mediates the biosynthesis of mycophenolic acid (MPA), the first isolated antibiotic natural product in the world. Does not play a role in the biosynthesis of MPA, but is involved in self resistance to MPA, since MPA acts as an inhibitor of IMP dehydrogenases. The polypeptide is Inosine-5'-monophosphate dehydrogenase (Penicillium brevicompactum).